A 260-amino-acid chain; its full sequence is Methylesterase 7 (260 aa).

S84 serves as the catalytic Acyl-ester intermediate. Catalysis depends on charge relay system residues D210 and H238.

Belongs to the AB hydrolase superfamily. Methylesterase family.

The enzyme catalyses methyl (indol-3-yl)acetate + H2O = (indol-3-yl)acetate + methanol + H(+). The catalysed reaction is methyl salicylate + H2O = salicylate + methanol + H(+). It functions in the pathway plant hormone biosynthesis. Esterase activity is down-regulated by salicylic acid (SA). Its function is as follows. Methylesterase shown to have carboxylesterase activity, methyl indole-3-acetic acid (MeIAA) esterase activity and methyl salicylate (MeSA) esterase activity in vitro. Required to convert methyl salicylate (MeSA) to salicylic acid (SA) as part of the signal transduction pathways that activate systemic acquired resistance in systemic tissue. MeSA is believed to be an inactive form that needs to be demethylated to exert a biological effect. The chain is Methylesterase 7 from Arabidopsis thaliana (Mouse-ear cress).